Consider the following 289-residue polypeptide: Probable aquaporin PIP2-6 (289 aa).

At methionine 1 the chain carries N-acetylmethionine. Over methionine 1–arginine 38 the chain is Cytoplasmic. Threonine 7 carries the post-translational modification Phosphothreonine. The residue at position 11 (serine 11) is a Phosphoserine. A helical membrane pass occupies residues alanine 39 to isoleucine 59. At glycine 60 to leucine 80 the chain is on the extracellular side. A helical membrane pass occupies residues glycine 81–serine 101. Topologically, residues glycine 102–alanine 124 are cytoplasmic. The NPA 1 motif lies at asparagine 106–alanine 108. Residues valine 125–phenylalanine 145 traverse the membrane as a helical segment. Residues glutamine 146–asparagine 165 are Extracellular-facing. The helical transmembrane segment at valine 166–serine 186 threads the bilayer. The Cytoplasmic segment spans residues alanine 187–proline 200. Residues valine 201–isoleucine 221 form a helical membrane-spanning segment. Residues threonine 222–tryptophan 248 lie on the Extracellular side of the membrane. The NPA 2 motif lies at asparagine 227–alanine 229. A helical transmembrane segment spans residues isoleucine 249–leucine 269. Topologically, residues arginine 270–alanine 289 are cytoplasmic. Serine 279 and serine 282 each carry phosphoserine.

The protein belongs to the MIP/aquaporin (TC 1.A.8) family. PIP (TC 1.A.8.11) subfamily. As to expression, expressed above ground, and in flower buds.

It is found in the cell membrane. Functionally, aquaporins facilitate the transport of water and small neutral solutes across cell membranes. The polypeptide is Probable aquaporin PIP2-6 (PIP2-6) (Arabidopsis thaliana (Mouse-ear cress)).